A 503-amino-acid chain; its full sequence is MAKRVQHEGGDYRPQKRSKNERNGEGSKVSPSAEAIRNELDPISDATYVQSPALGDLSQIEIDQFLAKHCIKVTDSSEAPPLRPIISFSHLPSSFSKIYDPLSSFSSPTPIQSATWPLLFAGRDVIGIAETGSGKTLAFGLPCIKKILDSGKVKRKHARPAAVIISPTRELAMQIYDQLSKFGASVDIRVTCIYGGVKKDEQREALKTAAIVVATPGRLKDLQNDGSVDLGKVKYLVLDEADRMLDKGFEQDIKDIIRSMPDSKRQTVMFTATWPPSVRDLAATFMTSAVTVTIGGDPSADPRANTRIKQVVEVVKPQEKEARLVQLLNRSQRGAAVCDKVLVFCLYKKEAVRVERLLRTKNFKVAGIHGDLNQHERFKSLEAFKTGAATVLVATDVAARGLDIPSVKLVINVTFPLTVEDYVHRIGRTGRAGADGHAITLFTETDKAQSGALINVLRAAKQDVPDALLKFGTTVKKKQHGAYGAFFKDVDTSKSATKIVFDE.

The segment covering 1-25 has biased composition (basic and acidic residues); sequence MAKRVQHEGGDYRPQKRSKNERNGE. Positions 1–35 are disordered; sequence MAKRVQHEGGDYRPQKRSKNERNGEGSKVSPSAEA. The short motif at 104 to 112 is the Q motif element; the sequence is SFSSPTPIQ. The 177-residue stretch at 116-292 folds into the Helicase ATP-binding domain; the sequence is WPLLFAGRDV…ATFMTSAVTV (177 aa). 129–136 contacts ATP; the sequence is AETGSGKT. The DEAD box motif lies at 239 to 242; the sequence is DEAD. The region spanning 307–472 is the Helicase C-terminal domain; it reads RIKQVVEVVK…DVPDALLKFG (166 aa).

The protein belongs to the DEAD box helicase family. DDX5/DBP2 subfamily.

The protein resides in the nucleus. The protein localises to the nucleolus. The catalysed reaction is ATP + H2O = ADP + phosphate + H(+). Its function is as follows. ATP-dependent RNA helicase required for 60S ribosomal subunit synthesis. Involved in efficient pre-rRNA processing, predominantly at site A3, which is necessary for the normal formation of 25S and 5.8S rRNAs. This Neosartorya fischeri (strain ATCC 1020 / DSM 3700 / CBS 544.65 / FGSC A1164 / JCM 1740 / NRRL 181 / WB 181) (Aspergillus fischerianus) protein is ATP-dependent RNA helicase dbp3 (dbp3).